The following is a 336-amino-acid chain: Ferrochelatase (336 aa).

Residues H206 and E287 each coordinate Fe cation.

The protein belongs to the ferrochelatase family.

The protein localises to the cytoplasm. The enzyme catalyses heme b + 2 H(+) = protoporphyrin IX + Fe(2+). Its pathway is porphyrin-containing compound metabolism; protoheme biosynthesis; protoheme from protoporphyrin-IX: step 1/1. Catalyzes the ferrous insertion into protoporphyrin IX. The protein is Ferrochelatase of Neisseria meningitidis serogroup B (strain ATCC BAA-335 / MC58).